We begin with the raw amino-acid sequence, 308 residues long: D-2-hydroxyacid dehydrogenase (308 aa).

NAD(+) is bound by residues 145 to 146 (TL), 224 to 226 (VAR), and aspartate 250. Arginine 226 is an active-site residue. Glutamate 255 is an active-site residue. Histidine 274 acts as the Proton donor in catalysis. NAD(+) is bound at residue 274–277 (HVSA).

The protein belongs to the D-isomer specific 2-hydroxyacid dehydrogenase family. In terms of assembly, homotetramer.

In terms of biological role, catalyzes the stereospecific NAD(P)H-dependent reduction of 2-ketocarboxylic acids into the corresponding D-2-hydroxycarboxylic acids. Can use both NADPH or NADH as reductant, displaying a marked preference for NADPH over NADH. Shows a broad substrate specificity, although it displays a marked preference for the 2-ketocarboxylic acids having an unbranched chain of 4-5 carbon atoms. The sequence is that of D-2-hydroxyacid dehydrogenase (ddh) from Haloferax mediterranei (strain ATCC 33500 / DSM 1411 / JCM 8866 / NBRC 14739 / NCIMB 2177 / R-4) (Halobacterium mediterranei).